Consider the following 307-residue polypeptide: Exosome complex component RRP45A (307 aa).

This sequence belongs to the RNase PH family. As to expression, expressed in roots, leaves, stems, buds and siliques.

It is found in the cytoplasm. The protein resides in the nucleus. Its function is as follows. Probable 3'-&gt;5' exoribonuclease involved in the regulation of cuticular wax biosynthesis. Can perform exosomal functions and partially complement the yeast rrp45 null mutant. The chain is Exosome complex component RRP45A from Arabidopsis thaliana (Mouse-ear cress).